The chain runs to 469 residues: Tubulin gamma-2 chain (469 aa).

Residue 142-148 (AGGTGSG) coordinates GTP.

It belongs to the tubulin family.

The protein resides in the cytoplasm. The protein localises to the cytoskeleton. Its subcellular location is the microtubule organizing center. Tubulin is the major constituent of microtubules. The gamma chain is found at microtubule organizing centers (MTOC) such as the spindle poles, suggesting that it is involved in the minus-end nucleation of microtubule assembly. The chain is Tubulin gamma-2 chain (TUBG2) from Zea mays (Maize).